A 70-amino-acid chain; its full sequence is Small, acid-soluble spore protein I (70 aa).

Belongs to the SspI family.

The protein resides in the spore core. The protein is Small, acid-soluble spore protein I of Bacillus licheniformis (strain ATCC 14580 / DSM 13 / JCM 2505 / CCUG 7422 / NBRC 12200 / NCIMB 9375 / NCTC 10341 / NRRL NRS-1264 / Gibson 46).